Consider the following 324-residue polypeptide: uncharacterized protein (324 aa).

9 helical membrane passes run methionine 34 to leucine 54, valine 76 to leucine 96, isoleucine 103 to leucine 123, isoleucine 127 to tyrosine 147, proline 158 to isoleucine 178, glycine 198 to serine 218, tyrosine 243 to isoleucine 263, leucine 275 to phenylalanine 295, and leucine 297 to isoleucine 317.

It localises to the membrane. This is an uncharacterized protein from Schizosaccharomyces pombe (strain 972 / ATCC 24843) (Fission yeast).